A 3421-amino-acid chain; its full sequence is Hemocyanin 2 (3421 aa).

Positions 1–19 are cleaved as a signal peptide; sequence MWTILALLTATLLFEGAFS. The tract at residues 20–442 is functional unit a (wall); that stretch reads VDTVVRKNVD…KPPVPVAQAN (423 aa). Residue His-62 coordinates Cu cation. A disulfide bridge connects residues Cys-68 and Cys-78. The 2'-(S-cysteinyl)-histidine (Cys-His) cross-link spans 79–81; it reads CLH. Cu cation is bound by residues His-81, His-90, His-200, His-204, and His-231. Disulfide bonds link Cys-190-Cys-257 and Cys-344-Cys-356. An N-linked (GlcNAc...) asparagine glycan is attached at Asn-408. The functional unit b (wall) stretch occupies residues 443-853; sequence LAVRKNINDL…RADAKDFGHS (411 aa). His-483 contributes to the Cu cation binding site. An intrachain disulfide couples Cys-489 to Cys-500. Positions 501–503 form a cross-link, 2'-(S-cysteinyl)-histidine (Cys-His); sequence CVH. Cu cation is bound by residues His-503, His-512, His-622, His-626, His-653, and His-894. The cysteines at positions 612 and 678 are disulfide-linked. One copy of the WD 1 repeat lies at 632–673; sequence SEKYSMSSLHYTAFDPIFYLHHSNVDRLWAIWQALQIRRGKS. Positions 854–1275 are functional unit c (wall); that stretch reads RKIRKAVDSL…DEYREAVTSA (422 aa). Cysteines 900 and 911 form a disulfide. A cross-link (2'-(S-cysteinyl)-histidine (Cys-His)) is located at residues 912–914; sequence CVH. Cu cation contacts are provided by His-914, His-923, His-1033, His-1037, and His-1063. Intrachain disulfides connect Cys-1023–Cys-1090 and Cys-1180–Cys-1187. Residues 1043 to 1084 form a WD 2 repeat; that stretch reads NEPYSMSSLRYTTYDPIFFLHRSNTDRLWAIWQALQKYRGKP. Residue Asn-1183 is glycosylated (N-linked (GlcNAc...) asparagine). The functional unit d (wall) stretch occupies residues 1276-1685; sequence SHIRKNIRDL…NIYYDGLSQH (410 aa). His-1313 is a binding site for Cu cation. A disulfide bridge connects residues Cys-1319 and Cys-1328. The segment at residues 1329 to 1331 is a cross-link (2'-(S-cysteinyl)-histidine (Cys-His)); that stretch reads CVH. Cu cation contacts are provided by His-1331 and His-1340. The stretch at 1387–1425 is one WD 3 repeat; it reads QTFDPNPFFRGHIAFENAVTSRDPQPELWDNKDFYENVM. 2 disulfides stabilise this stretch: Cys-1434-Cys-1501 and Cys-1590-Cys-1599. Cu cation-binding residues include His-1444, His-1448, and His-1475. The stretch at 1454–1495 is one WD 4 repeat; sequence RAKYSLSSLDYTAFDPVFFLHHANVDRIWAIWQDLQRYRKKP. Asn-1653 is a glycosylation site (N-linked (GlcNAc...) asparagine). The tract at residues 1686 to 2102 is functional unit e (wall); that stretch reads NLVRKEVSSL…HGINVRHVGR (417 aa). His-1726 lines the Cu cation pocket. The cysteines at positions 1732 and 1743 are disulfide-linked. A cross-link (2'-(S-cysteinyl)-histidine (Cys-His)) is located at residues 1744–1746; sequence CLH. Residues His-1746, His-1755, His-1868, His-1872, and His-1899 each contribute to the Cu cation site. 2 disulfide bridges follow: Cys-1858–Cys-1925 and Cys-2014–Cys-2020. A WD 5 repeat occupies 1878 to 1919; it reads SKTHSIGHLHYASYDPLFYIHHSQTDRIWAIWQALQEHRGLS. A functional unit f (wall) region spans residues 2103–2522; the sequence is NRIRMELSEL…DDHGSDHIAG (420 aa). Residue His-2143 participates in Cu cation binding. A disulfide bridge links Cys-2149 with Cys-2159. Residues 2160 to 2162 constitute a cross-link (2'-(S-cysteinyl)-histidine (Cys-His)); sequence CIH. Cu cation is bound by residues His-2162, His-2171, His-2281, His-2285, and His-2312. The stretch at 2168-2204 is one WD 6 repeat; sequence PHWHRLYTLQMDMALLSHGSAVAIPYWDWTKPISKLP. 2 disulfide bridges follow: Cys-2271–Cys-2338 and Cys-2425–Cys-2431. A functional unit g (internal arc) region spans residues 2523 to 2929; the sequence is SGVRKDVTSL…SGHDHSERHD (407 aa). His-2563 is a binding site for Cu cation. Cysteines 2569 and 2579 form a disulfide. The 2'-(S-cysteinyl)-histidine (Cys-His) cross-link spans 2580–2582; sequence CTH. His-2582, His-2591, His-2691, His-2695, and His-2722 together coordinate Cu cation. 2 disulfide bridges follow: Cys-2681–Cys-2748 and Cys-2835–Cys-2841. A WD 7 repeat occupies 2700–2742; the sequence is GHTPYGMSSLEYTAYDPLFYLHHSNTDRIWAIWQALQKYRGFQ. Positions 2898–2927 are disordered; sequence PSDRIKSPTIEHHGGDHHGGDTSGHDHSER. A functional unit h (internal slab) region spans residues 2930–3421; that stretch reads GFFRKEVGSL…VRIHIHIEDE (492 aa). Position 2970 (His-2970) interacts with Cu cation. Cys-2976 and Cys-2986 are oxidised to a cystine. The segment at residues 2987–2989 is a cross-link (2'-(S-cysteinyl)-histidine (Cys-His)); sequence CVH. Cu cation-binding residues include His-2989, His-2998, His-3099, His-3103, and His-3130. 2 disulfides stabilise this stretch: Cys-3089/Cys-3156 and Cys-3374/Cys-3407. A WD 8 repeat occupies 3109–3150; that stretch reads TETYSMSSLAFSAYDPVFMILHSGLDRLWIIWQELQKLRKKP.

The protein belongs to the tyrosinase family. Hemocyanin subfamily. As to quaternary structure, homo-didecamer and homo-multidecamer. Post-translationally, probably N-glycosylated. Asn-2489 is buried deeply in the protein which make it inaccessible for sugar attachment. In terms of tissue distribution, hemolymph.

It is found in the secreted. The protein resides in the extracellular space. In terms of biological role, hemocyanins are copper-containing oxygen carriers occurring freely dissolved in the hemolymph of many mollusks and arthropods. This Megathura crenulata (Giant keyhole limpet) protein is Hemocyanin 2.